Consider the following 425-residue polypeptide: Serine--tRNA ligase (425 aa).

2 disordered regions span residues glutamine 43–proline 68 and leucine 108–tryptophan 131. Residues proline 117–tryptophan 131 are compositionally biased toward basic and acidic residues. Threonine 233–glutamate 235 serves as a coordination point for L-serine. Arginine 264–glutamate 266 serves as a coordination point for ATP. Glutamate 287 is a binding site for L-serine. Glutamate 351–serine 354 is an ATP binding site. Serine 385 is an L-serine binding site.

The protein belongs to the class-II aminoacyl-tRNA synthetase family. Type-1 seryl-tRNA synthetase subfamily. In terms of assembly, homodimer. The tRNA molecule binds across the dimer.

It is found in the cytoplasm. The catalysed reaction is tRNA(Ser) + L-serine + ATP = L-seryl-tRNA(Ser) + AMP + diphosphate + H(+). It carries out the reaction tRNA(Sec) + L-serine + ATP = L-seryl-tRNA(Sec) + AMP + diphosphate + H(+). The protein operates within aminoacyl-tRNA biosynthesis; selenocysteinyl-tRNA(Sec) biosynthesis; L-seryl-tRNA(Sec) from L-serine and tRNA(Sec): step 1/1. Its function is as follows. Catalyzes the attachment of serine to tRNA(Ser). Is also able to aminoacylate tRNA(Sec) with serine, to form the misacylated tRNA L-seryl-tRNA(Sec), which will be further converted into selenocysteinyl-tRNA(Sec). The chain is Serine--tRNA ligase from Prochlorococcus marinus (strain MIT 9303).